A 499-amino-acid chain; its full sequence is Lysosomal Pro-X carboxypeptidase (499 aa).

Positions 1 to 21 (MGRCSLLLLLLLIAFLTPGAA) are cleaved as a signal peptide. Positions 22 to 47 (NPVSPSLRAPSSLPWSTSFRSRPTIT) are excised as a propeptide. Residue Asn103 is glycosylated (N-linked (GlcNAc...) asparagine). The active-site Charge relay system is Ser181. The tract at residues 196 to 337 (HLVVGALASS…QNIFQALNVY (142 aa)) is SKS domain. Intrachain disulfides connect Cys217-Cys375, Cys235-Cys313, Cys266-Cys346, and Cys367-Cys397. A glycan (N-linked (GlcNAc...) asparagine) is linked at Asn234. N-linked (GlcNAc...) asparagine glycans are attached at residues Asn339 and Asn348. N-linked (GlcNAc...) asparagine glycosylation is present at Asn418. Catalysis depends on charge relay system residues Asp433 and His458.

This sequence belongs to the peptidase S28 family. As to quaternary structure, homodimer.

It is found in the lysosome. It carries out the reaction Cleavage of a -Pro-|-Xaa bond to release a C-terminal amino acid.. In terms of biological role, cleaves C-terminal amino acids linked to proline in peptides such as angiotensin II, III and des-Arg9-bradykinin. This cleavage occurs at acidic pH, but enzymatic activity is retained with some substrates at neutral pH. The chain is Lysosomal Pro-X carboxypeptidase (PRCP) from Bos taurus (Bovine).